The primary structure comprises 276 residues: 4-chlorobenzoyl coenzyme A dehalogenase-1 (276 aa).

Residue 66–71 (AGFDLE) participates in substrate binding. Catalysis depends on His-93, which acts as the Proton acceptor. Gly-117 provides a ligand contact to substrate. Asp-148 acts as the Nucleophile in catalysis. Residue Arg-261 participates in substrate binding.

This sequence belongs to the enoyl-CoA hydratase/isomerase family. In terms of assembly, homotetramer.

It carries out the reaction 4-chlorobenzoyl-CoA + H2O = 4-hydroxybenzoyl-CoA + chloride + H(+). The protein operates within xenobiotic degradation; 4-chlorobenzoate degradation; 4-hydroxybenzoate from 4-chlorobenzoate: step 2/3. Its function is as follows. Dehalogenates 4-chlorobenzoyl-CoA, 4-iodobenzoyl-CoA, 4-bromobenzoyl-CoA and, at a slower rate, 4-fluorobenzoyl-CoA. Does not dehalogenate 2-chlorobenzoyl-CoA or 3-chlorobenzoyl-CoA. This Arthrobacter sp protein is 4-chlorobenzoyl coenzyme A dehalogenase-1.